We begin with the raw amino-acid sequence, 727 residues long: 1,4-alpha-glucan branching enzyme GlgB (727 aa).

D405 functions as the Nucleophile in the catalytic mechanism. The Proton donor role is filled by E458.

This sequence belongs to the glycosyl hydrolase 13 family. GlgB subfamily. Monomer.

It catalyses the reaction Transfers a segment of a (1-&gt;4)-alpha-D-glucan chain to a primary hydroxy group in a similar glucan chain.. It functions in the pathway glycan biosynthesis; glycogen biosynthesis. In terms of biological role, catalyzes the formation of the alpha-1,6-glucosidic linkages in glycogen by scission of a 1,4-alpha-linked oligosaccharide from growing alpha-1,4-glucan chains and the subsequent attachment of the oligosaccharide to the alpha-1,6 position. The sequence is that of 1,4-alpha-glucan branching enzyme GlgB from Yersinia pseudotuberculosis serotype I (strain IP32953).